Here is a 360-residue protein sequence, read N- to C-terminus: DNA replication and repair protein RecF (360 aa).

Residue 30–37 (GQNGSGKT) participates in ATP binding.

This sequence belongs to the RecF family.

It is found in the cytoplasm. Functionally, the RecF protein is involved in DNA metabolism; it is required for DNA replication and normal SOS inducibility. RecF binds preferentially to single-stranded, linear DNA. It also seems to bind ATP. This chain is DNA replication and repair protein RecF, found in Shewanella baltica (strain OS155 / ATCC BAA-1091).